Here is a 431-residue protein sequence, read N- to C-terminus: Serine--tRNA ligase (431 aa).

Residue 235–237 (TAE) participates in L-serine binding. ATP-binding positions include 266–268 (RRE) and Val282. Glu289 lines the L-serine pocket. Residue 353–356 (EASS) participates in ATP binding. Ser389 contacts L-serine.

It belongs to the class-II aminoacyl-tRNA synthetase family. Type-1 seryl-tRNA synthetase subfamily. In terms of assembly, homodimer. The tRNA molecule binds across the dimer.

It localises to the cytoplasm. The enzyme catalyses tRNA(Ser) + L-serine + ATP = L-seryl-tRNA(Ser) + AMP + diphosphate + H(+). It carries out the reaction tRNA(Sec) + L-serine + ATP = L-seryl-tRNA(Sec) + AMP + diphosphate + H(+). It functions in the pathway aminoacyl-tRNA biosynthesis; selenocysteinyl-tRNA(Sec) biosynthesis; L-seryl-tRNA(Sec) from L-serine and tRNA(Sec): step 1/1. Its function is as follows. Catalyzes the attachment of serine to tRNA(Ser). Is also able to aminoacylate tRNA(Sec) with serine, to form the misacylated tRNA L-seryl-tRNA(Sec), which will be further converted into selenocysteinyl-tRNA(Sec). This chain is Serine--tRNA ligase, found in Prosthecochloris aestuarii (strain DSM 271 / SK 413).